We begin with the raw amino-acid sequence, 1298 residues long: Phosphoribosylformylglycinamidine synthase (1298 aa).

The interval 303-327 (FPGAATGSGGEIRDEGATGRGAKPK) is disordered. Residues 305-316 (GAATGSGGEIRD), 384-386 (TGY), and alanine 676 contribute to the ATP site. The Mg(2+) site is built by aspartate 677, glutamate 716, asparagine 720, and aspartate 884. Serine 886 provides a ligand contact to ATP. A Glutamine amidotransferase type-1 domain is found at 1045-1298 (VAVLREQGVN…MFRNARAWVN (254 aa)). The Nucleophile role is filled by cysteine 1138. Residues histidine 1263 and glutamate 1265 contribute to the active site.

The protein in the N-terminal section; belongs to the FGAMS family. Monomer.

It localises to the cytoplasm. The catalysed reaction is N(2)-formyl-N(1)-(5-phospho-beta-D-ribosyl)glycinamide + L-glutamine + ATP + H2O = 2-formamido-N(1)-(5-O-phospho-beta-D-ribosyl)acetamidine + L-glutamate + ADP + phosphate + H(+). It participates in purine metabolism; IMP biosynthesis via de novo pathway; 5-amino-1-(5-phospho-D-ribosyl)imidazole from N(2)-formyl-N(1)-(5-phospho-D-ribosyl)glycinamide: step 1/2. Phosphoribosylformylglycinamidine synthase involved in the purines biosynthetic pathway. Catalyzes the ATP-dependent conversion of formylglycinamide ribonucleotide (FGAR) and glutamine to yield formylglycinamidine ribonucleotide (FGAM) and glutamate. In Pseudomonas savastanoi pv. phaseolicola (strain 1448A / Race 6) (Pseudomonas syringae pv. phaseolicola (strain 1448A / Race 6)), this protein is Phosphoribosylformylglycinamidine synthase.